A 116-amino-acid polypeptide reads, in one-letter code: UPF0482 protein ECA2253 (116 aa).

A signal peptide spans 1–31; sequence MNHYSFSSLIRALIPLSLVIVSAVWQPAALA.

It belongs to the UPF0482 family.

The chain is UPF0482 protein ECA2253 from Pectobacterium atrosepticum (strain SCRI 1043 / ATCC BAA-672) (Erwinia carotovora subsp. atroseptica).